The primary structure comprises 594 residues: Solute carrier family 13 member 1 (594 aa).

A run of 5 helical transmembrane segments spans residues 13-33 (FLLVVFTILVFLPLPLIIRTK), 40-60 (ILFVIAIFWITEALPLSITAL), 77-97 (VASAYFKDFHLLLIGVICLAT), 113-133 (VMMVGVNPAWLTLGFMSSTAF), and 134-154 (LSMWLSNTSTAAMVMPIVEAV). A glycan (N-linked (GlcNAc...) asparagine) is linked at N174. Basic and acidic residues predominate over residues 192–220 (TNEKKEKTKPAPGSSHDKGKVSRKMETEK). Residues 192–226 (TNEKKEKTKPAPGSSHDKGKVSRKMETEKNAVTGA) are disordered. Helical transmembrane passes span 239–259 (LMCLSVAYSSTIGGLTTITGT), 283–303 (SWFLFSFPVALILLLLSWIWL), 347–367 (IVTLVIFIVMALLWFSRDPGF), 380–400 (GYVTDSTVALVAGILFFLIPA), 461–481 (LSPLGSLPVWLIILISSLIVT), 487–507 (ASNPATITILFPILSPLAEAI), 511–531 (PLQILLPSTLCTSFAFLLPVA), and 552–572 (AGLGVNILGVAVVMLGMFTWI). Residue N590 is glycosylated (N-linked (GlcNAc...) asparagine).

The protein belongs to the SLC13A/DASS transporter (TC 2.A.47) family. NADC subfamily. As to expression, highly expressed in kidney and ileum, detected at lower levels in duodenum/jejunum and colon, and at very low levels in cecum, testis, adrenal and adipose tissues. Expressed in the kidney.

It localises to the apical cell membrane. It carries out the reaction sulfate(out) + 3 Na(+)(out) = sulfate(in) + 3 Na(+)(in). It catalyses the reaction selenate(out) + 3 Na(+)(out) = selenate(in) + 3 Na(+)(in). The catalysed reaction is thiosulfate(out) + 3 Na(+)(out) = thiosulfate(in) + 3 Na(+)(in). In terms of biological role, sodium:sulfate symporter that mediates sulfate reabsorption in the kidney and small intestine. Can also mediate the transport of selenate and thiosulfate. This chain is Solute carrier family 13 member 1 (Slc13a1), found in Mus musculus (Mouse).